A 376-amino-acid chain; its full sequence is Natterin-2 (376 aa).

The first 18 residues, 1 to 18 (MNLSVLLVTLLLLSWTSA), serve as a signal peptide directing secretion. Residues 19–27 (EKDLKVRVA) constitute a propeptide that is removed on maturation.

Belongs to the natterin family. Post-translationally, contains 4 disulfide bonds. In terms of tissue distribution, expressed by the venom gland.

The protein localises to the secreted. With respect to regulation, inhibited by tissue-kallikrein inhibitor TKI and trasylol. Plasma kallikrein inhibitor PKSI527 and classical inhibitors of serine-, metallo-, thiol- or aspartate-peptidases evokes a minor inhibition of the peptide digestion. Functionally, shows nociceptive, edema-inducing and kininogenase activity with release of kallidin from low molecular weight kininogen. The cleavage occurs at Met-Lys bonds. The sequence is that of Natterin-2 from Thalassophryne nattereri (Copper Joe toadfish).